Reading from the N-terminus, the 184-residue chain is Interferon alpha-1 (184 aa).

A signal peptide spans Met1 to Gly23. Intrachain disulfides connect Cys24/Cys122 and Cys52/Cys162.

Belongs to the alpha/beta interferon family. In terms of assembly, interacts with CR2.

Its subcellular location is the secreted. Functionally, produced by macrophages, IFN-alpha have antiviral activities. Interferon stimulates the production of two enzymes: a protein kinase and an oligoadenylate synthetase. This is Interferon alpha-1 from Equus caballus (Horse).